The sequence spans 442 residues: Probable diguanylate cyclase DgcI (442 aa).

The first 23 residues, 1 to 23, serve as a signal peptide directing secretion; that stretch reads MSRINKFVLTVSLLIFIMISAVA. Residue cysteine 24 is the site of N-palmitoyl cysteine attachment. Cysteine 24 is lipidated: S-diacylglycerol cysteine. Residues 231-251 form a helical membrane-spanning segment; the sequence is LIIFFAALVAVISGASCLYLV. Residues 319–442 form the GGDEF domain; it reads KGGYLCLFDV…KNGRAQISWQ (124 aa). Aspartate 327 serves as a coordination point for Mg(2+). Substrate contacts are provided by asparagine 335, histidine 340, and aspartate 344. Aspartate 371 is a binding site for Mg(2+).

In terms of assembly, homodimer. Mg(2+) is required as a cofactor.

The protein resides in the cell membrane. It catalyses the reaction 2 GTP = 3',3'-c-di-GMP + 2 diphosphate. The protein operates within purine metabolism; 3',5'-cyclic di-GMP biosynthesis. Its function is as follows. Catalyzes the synthesis of cyclic-di-GMP (c-di-GMP) via the condensation of 2 GTP molecules. In Escherichia coli (strain K12), this protein is Probable diguanylate cyclase DgcI.